We begin with the raw amino-acid sequence, 212 residues long: Ribosomal RNA small subunit methyltransferase G (212 aa).

S-adenosyl-L-methionine contacts are provided by residues glycine 73, 127-128 (IE), and arginine 143.

Belongs to the methyltransferase superfamily. RNA methyltransferase RsmG family.

Its subcellular location is the cytoplasm. The enzyme catalyses guanosine(527) in 16S rRNA + S-adenosyl-L-methionine = N(7)-methylguanosine(527) in 16S rRNA + S-adenosyl-L-homocysteine. In terms of biological role, specifically methylates the N7 position of guanine in position 527 of 16S rRNA. The polypeptide is Ribosomal RNA small subunit methyltransferase G (Methylobacterium sp. (strain 4-46)).